We begin with the raw amino-acid sequence, 264 residues long: ATP synthase subunit a (264 aa).

A run of 6 helical transmembrane segments spans residues 27 to 47, 87 to 107, 131 to 151, 172 to 192, 196 to 216, and 230 to 250; these read VHLD…FVFS, VGPL…IDLI, DISG…FYTI, LLIP…PVSL, LFGN…MYMA, and LAWA…FMML.

This sequence belongs to the ATPase A chain family. F-type ATPases have 2 components, CF(1) - the catalytic core - and CF(0) - the membrane proton channel. CF(1) has five subunits: alpha(3), beta(3), gamma(1), delta(1), epsilon(1). CF(0) has three main subunits: a(1), b(2) and c(9-12). The alpha and beta chains form an alternating ring which encloses part of the gamma chain. CF(1) is attached to CF(0) by a central stalk formed by the gamma and epsilon chains, while a peripheral stalk is formed by the delta and b chains.

Its subcellular location is the cell inner membrane. In terms of biological role, key component of the proton channel; it plays a direct role in the translocation of protons across the membrane. In Pasteurella multocida (strain Pm70), this protein is ATP synthase subunit a.